The sequence spans 148 residues: Large ribosomal subunit protein uL15 (148 aa).

Over residues Met1–Gly28 the composition is skewed to basic residues. The interval Met1–Lys43 is disordered. The segment covering Gly29–Gly38 has biased composition (gly residues).

It belongs to the universal ribosomal protein uL15 family. Part of the 50S ribosomal subunit.

In terms of biological role, binds to the 23S rRNA. This Thermococcus kodakarensis (strain ATCC BAA-918 / JCM 12380 / KOD1) (Pyrococcus kodakaraensis (strain KOD1)) protein is Large ribosomal subunit protein uL15.